Here is a 164-residue protein sequence, read N- to C-terminus: DNA-binding protein inhibitor ID-1 (164 aa).

Residues 46–98 (LPALLDEQQVNVLLYDMNGCYSRLKELVPTLPQNRKVSKVEILQHVIDYIRDL) form the bHLH domain. Positions 91–104 (VIDYIRDLQLELNS) match the Nuclear export signal motif.

Heterodimer with other HLH proteins. Interacts with COPS5, IFI204, GATA4, NKX2-5, CLOCK and BMAL1. Isoform Short can form homodimers. In terms of processing, phosphorylated in vitro by PKA and PKC.

Its subcellular location is the cytoplasm. It localises to the nucleus. In terms of biological role, transcriptional regulator (lacking a basic DNA binding domain) which negatively regulates the basic helix-loop-helix (bHLH) transcription factors by forming heterodimers and inhibiting their DNA binding and transcriptional activity. Implicated in regulating a variety of cellular processes, including cellular growth, senescence, differentiation, apoptosis, angiogenesis, and neoplastic transformation. Inhibits skeletal muscle and cardiac myocyte differentiation. Regulates the circadian clock by repressing the transcriptional activator activity of the CLOCK-BMAL1 heterodimer. This is DNA-binding protein inhibitor ID-1 (Id1) from Rattus norvegicus (Rat).